We begin with the raw amino-acid sequence, 173 residues long: Translation initiation factor IF-3 (173 aa).

This sequence belongs to the IF-3 family. As to quaternary structure, monomer.

The protein localises to the cytoplasm. Functionally, IF-3 binds to the 30S ribosomal subunit and shifts the equilibrium between 70S ribosomes and their 50S and 30S subunits in favor of the free subunits, thus enhancing the availability of 30S subunits on which protein synthesis initiation begins. The protein is Translation initiation factor IF-3 of Bacillus subtilis (strain 168).